A 261-amino-acid polypeptide reads, in one-letter code: Carboxy-terminal domain RNA polymerase II polypeptide A small phosphatase 1 (261 aa).

Methionine 1 is subject to N-acetylmethionine. The segment covering 1–10 (MDSSAVITQI) has biased composition (polar residues). The disordered stretch occupies residues 1–33 (MDSSAVITQISKEEARGPLRGKGDQKSAASQKP). Residues 11–25 (SKEEARGPLRGKGDQ) show a composition bias toward basic and acidic residues. The FCP1 homology domain maps to 86 to 244 (QDSDKICVVI…HDLLPFFEQL (159 aa)). The 4-aspartylphosphate intermediate role is filled by aspartate 96. Residues aspartate 96, aspartate 98, and asparagine 207 each coordinate Mg(2+). The active-site Proton donor is aspartate 98.

In terms of assembly, monomer. Interacts with GTF2F1. Interacts with REST. Mg(2+) is required as a cofactor. As to expression, expression is restricted to non-neuronal tissues. Highest expression in skeletal muscle, spleen, lung and placenta.

It is found in the nucleus. It carries out the reaction O-phospho-L-seryl-[protein] + H2O = L-seryl-[protein] + phosphate. It catalyses the reaction O-phospho-L-threonyl-[protein] + H2O = L-threonyl-[protein] + phosphate. With respect to regulation, stimulated by GTF2F1. Inhibited by beryllofluoride anions. In terms of biological role, preferentially catalyzes the dephosphorylation of 'Ser-5' within the tandem 7 residue repeats in the C-terminal domain (CTD) of the largest RNA polymerase II subunit POLR2A. Negatively regulates RNA polymerase II transcription, possibly by controlling the transition from initiation/capping to processive transcript elongation. Recruited by REST to neuronal genes that contain RE-1 elements, leading to neuronal gene silencing in non-neuronal cells. This Homo sapiens (Human) protein is Carboxy-terminal domain RNA polymerase II polypeptide A small phosphatase 1 (CTDSP1).